Consider the following 94-residue polypeptide: Small ribosomal subunit protein uS19 (94 aa).

The protein belongs to the universal ribosomal protein uS19 family.

In terms of biological role, protein S19 forms a complex with S13 that binds strongly to the 16S ribosomal RNA. The protein is Small ribosomal subunit protein uS19 of Elusimicrobium minutum (strain Pei191).